Reading from the N-terminus, the 275-residue chain is Transmembrane protein 202 (275 aa).

4 helical membrane passes run 60–80 (SGFS…QFLV), 116–136 (ALFL…LSSC), 151–171 (VSML…LFLA), and 193–213 (WCSE…FITF).

The protein resides in the membrane. This chain is Transmembrane protein 202 (Tmem202), found in Mus musculus (Mouse).